Reading from the N-terminus, the 24-residue chain is Conotoxin PIVE (24 aa).

Intrachain disulfides connect C2–C10, C3–C15, and C13–C19. Lysine amide is present on K24.

The protein belongs to the conotoxin A superfamily. In terms of tissue distribution, expressed by the venom duct.

It localises to the secreted. Functionally, probable neurotoxin with ion channel inhibitor activity. In vivo, elicits dose-dependently excitatory activity upon injection into fish. Its action is slowly reversible. The protein is Conotoxin PIVE of Conus purpurascens (Purple cone).